The following is a 499-amino-acid chain: Ethanolamine-phosphate phospho-lyase (499 aa).

Lys278 carries the post-translational modification N6-(pyridoxal phosphate)lysine.

Belongs to the class-III pyridoxal-phosphate-dependent aminotransferase family. Homotetramer. It depends on pyridoxal 5'-phosphate as a cofactor.

It localises to the mitochondrion. It carries out the reaction phosphoethanolamine + H2O = acetaldehyde + NH4(+) + phosphate. Catalyzes the pyridoxal-phosphate-dependent breakdown of phosphoethanolamine, converting it to ammonia, inorganic phosphate and acetaldehyde. In Mus musculus (Mouse), this protein is Ethanolamine-phosphate phospho-lyase (Etnppl).